The chain runs to 124 residues: Small ribosomal subunit protein uS12 (124 aa).

Residues 1-20 are disordered; it reads MATISQLVRNPRKDKVQKTS. D89 bears the 3-methylthioaspartic acid mark. Residues 104-124 are disordered; the sequence is TSGVTARRKGRSKYGAKRPKA. Basic residues predominate over residues 109–124; that stretch reads ARRKGRSKYGAKRPKA.

Belongs to the universal ribosomal protein uS12 family. In terms of assembly, part of the 30S ribosomal subunit. Contacts proteins S8 and S17. May interact with IF1 in the 30S initiation complex.

Its function is as follows. With S4 and S5 plays an important role in translational accuracy. In terms of biological role, interacts with and stabilizes bases of the 16S rRNA that are involved in tRNA selection in the A site and with the mRNA backbone. Located at the interface of the 30S and 50S subunits, it traverses the body of the 30S subunit contacting proteins on the other side and probably holding the rRNA structure together. The combined cluster of proteins S8, S12 and S17 appears to hold together the shoulder and platform of the 30S subunit. The protein is Small ribosomal subunit protein uS12 of Psychromonas ingrahamii (strain DSM 17664 / CCUG 51855 / 37).